A 72-amino-acid polypeptide reads, in one-letter code: Translation initiation factor IF-1 (72 aa).

An S1-like domain is found at 1–72; that stretch reads MSKEELIEFE…TKGRITYRFK (72 aa).

This sequence belongs to the IF-1 family. In terms of assembly, component of the 30S ribosomal translation pre-initiation complex which assembles on the 30S ribosome in the order IF-2 and IF-3, IF-1 and N-formylmethionyl-tRNA(fMet); mRNA recruitment can occur at any time during PIC assembly.

Its subcellular location is the cytoplasm. Its function is as follows. One of the essential components for the initiation of protein synthesis. Stabilizes the binding of IF-2 and IF-3 on the 30S subunit to which N-formylmethionyl-tRNA(fMet) subsequently binds. Helps modulate mRNA selection, yielding the 30S pre-initiation complex (PIC). Upon addition of the 50S ribosomal subunit IF-1, IF-2 and IF-3 are released leaving the mature 70S translation initiation complex. The polypeptide is Translation initiation factor IF-1 (Hyphomonas neptunium (strain ATCC 15444)).